The chain runs to 692 residues: MSNAATGSRVLYLGSDQGLMRDLTALVEPKSVQLVQLGSASALAQELRRLAPEVVILDAAAVSVEGGLAAFLGTLYGGEAFHPRAICIARAGSGEDRMEQRLAALRAGAASYLVPPISVKRLASRVLRMCGIVETVRYRILILEQDASHAKKIASLLATIGMETLVVDDPMKILARMQAFRPNLVLMDLYLPGATGSELTTIIRDHDDFYGIPILFLSQEADLDKQLAALKAGGDGFIKKPVSREALIAAVEYRMRMSRWLQDRRTLVNRRETAGGFLPRDVFMRHLEQITRAREAQGGVHGLVIIDVDGSQGILNALGLTATEKLLRELESLLSKTMTPEESATRMDDFRYGLLAKRETLSKLEALASTLCQQLSGLKPQDRDIKLEVSVSVGVGLFDPPADDAFAMVSRAEKAAAGAKSAGGNQAHVWSAASRQNGAPEAESVIKRLVSTALAQDGFLLFFQPILSLNQQEDELYEAQIRMKTLDGEQMPPAEFLSVAERAEMMPRIDRWVLRRAFEVMHAERVAHPRLRLLVHQNVMTLAAPEWFPWFRDQIIKRNLTQIYPVLELQMADVRQNRAEAKVFIERLRKYGIQVCVANVTGIREEISLLARIGATLAKLAFQTIRNADRIQLTEIVQALQARGVAVIAAGIDDQATVSRVWTCRPDFIQGNYLQLPQPELSFDFQHMSHDG.

Response regulatory domains lie at 9 to 130 (RVLY…LRMC) and 139 to 255 (RILI…EYRM). 4-aspartylphosphate occurs at positions 58 and 188. A GGDEF domain is found at 299-432 (GVHGLVIIDV…GGNQAHVWSA (134 aa)). Positions 443–691 (ESVIKRLVST…SFDFQHMSHD (249 aa)) constitute an EAL domain.

This is an uncharacterized protein from Thiocystis violacea.